A 400-amino-acid chain; its full sequence is Enoyl-[acyl-carrier-protein] reductase [NADH] (400 aa).

Residues Gly-48 to Tyr-53, Phe-74 to Glu-75, Asp-111 to Ala-112, and Leu-139 to Ala-140 each bind NAD(+). Tyr-225 contributes to the substrate binding site. Tyr-235 (proton donor) is an active-site residue. NAD(+) is bound by residues Lys-244 and Val-273–Thr-275.

The protein belongs to the TER reductase family. Monomer.

It catalyses the reaction a 2,3-saturated acyl-[ACP] + NAD(+) = a (2E)-enoyl-[ACP] + NADH + H(+). Its pathway is lipid metabolism; fatty acid biosynthesis. Involved in the final reduction of the elongation cycle of fatty acid synthesis (FAS II). Catalyzes the reduction of a carbon-carbon double bond in an enoyl moiety that is covalently linked to an acyl carrier protein (ACP). This chain is Enoyl-[acyl-carrier-protein] reductase [NADH], found in Burkholderia vietnamiensis (strain G4 / LMG 22486) (Burkholderia cepacia (strain R1808)).